Reading from the N-terminus, the 218-residue chain is Cytochrome b6 (218 aa).

Residues 35–55 form a helical membrane-spanning segment; it reads IFYCLGGITLVCFLIQFATGF. Residue Cys38 coordinates heme c. Heme b contacts are provided by His89 and His103. The next 3 helical transmembrane spans lie at 93-113, 119-139, and 189-209; these read ASMM…TGGF, LTWV…VTGY, and LHTF…FLMI. The heme b site is built by His190 and His205.

The protein belongs to the cytochrome b family. PetB subfamily. The 4 large subunits of the cytochrome b6-f complex are cytochrome b6, subunit IV (17 kDa polypeptide, PetD), cytochrome f and the Rieske protein, while the 4 small subunits are PetG, PetL, PetM and PetN. The complex functions as a dimer. The cofactor is heme b. It depends on heme c as a cofactor.

The protein localises to the cellular thylakoid membrane. In terms of biological role, component of the cytochrome b6-f complex, which mediates electron transfer between photosystem II (PSII) and photosystem I (PSI), cyclic electron flow around PSI, and state transitions. This chain is Cytochrome b6, found in Synechococcus sp. (strain WH7803).